The chain runs to 723 residues: Catalase-peroxidase (723 aa).

The tryptophyl-tyrosyl-methioninium (Trp-Tyr) (with M-251) cross-link spans 96–225 (WHAAGSYRVA…LAAVMMGLIY (130 aa)). The Proton acceptor role is filled by His-97. A cross-link (tryptophyl-tyrosyl-methioninium (Tyr-Met) (with W-96)) is located at residues 225 to 251 (YVNPEGVDGNPDPLKTAEDVRVTFARM). His-266 is a binding site for heme b.

It belongs to the peroxidase family. Peroxidase/catalase subfamily. Homodimer or homotetramer. Heme b is required as a cofactor. Post-translationally, formation of the three residue Trp-Tyr-Met cross-link is important for the catalase, but not the peroxidase activity of the enzyme.

It catalyses the reaction H2O2 + AH2 = A + 2 H2O. The catalysed reaction is 2 H2O2 = O2 + 2 H2O. Bifunctional enzyme with both catalase and broad-spectrum peroxidase activity. This is Catalase-peroxidase from Alkalilimnicola ehrlichii (strain ATCC BAA-1101 / DSM 17681 / MLHE-1).